Here is a 187-residue protein sequence, read N- to C-terminus: Elongation factor P (187 aa).

This sequence belongs to the elongation factor P family.

It localises to the cytoplasm. Its pathway is protein biosynthesis; polypeptide chain elongation. In terms of biological role, involved in peptide bond synthesis. Stimulates efficient translation and peptide-bond synthesis on native or reconstituted 70S ribosomes in vitro. Probably functions indirectly by altering the affinity of the ribosome for aminoacyl-tRNA, thus increasing their reactivity as acceptors for peptidyl transferase. This is Elongation factor P from Parasynechococcus marenigrum (strain WH8102).